Consider the following 193-residue polypeptide: Molybdopterin synthase catalytic subunit (193 aa).

Residues 118 to 119 (HR), Lys-134, and 141 to 143 (KKE) contribute to the substrate site. The segment at 159 to 193 (DRTTTDGTTASSPAPATRPAKGGGCCGSKVRANES) is disordered. A compositionally biased stretch (low complexity) spans 163–178 (TDGTTASSPAPATRPA).

It belongs to the MoaE family. MOCS2B subfamily. In terms of assembly, heterotetramer; composed of 2 small (MOCS2A) and 2 large (MOCS2B) subunits.

The protein localises to the cytoplasm. The enzyme catalyses 2 [molybdopterin-synthase sulfur-carrier protein]-C-terminal-Gly-aminoethanethioate + cyclic pyranopterin phosphate + H2O = molybdopterin + 2 [molybdopterin-synthase sulfur-carrier protein]-C-terminal Gly-Gly + 2 H(+). It participates in cofactor biosynthesis; molybdopterin biosynthesis. Its function is as follows. Catalytic subunit of the molybdopterin synthase complex, a complex that catalyzes the conversion of precursor Z into molybdopterin. Acts by mediating the incorporation of 2 sulfur atoms from thiocarboxylated MOCS2A into precursor Z to generate a dithiolene group. In Oryza sativa subsp. indica (Rice), this protein is Molybdopterin synthase catalytic subunit.